A 418-amino-acid polypeptide reads, in one-letter code: Tryptophan synthase beta chain (418 aa).

Over residues 1–17 (MTSTLPNASTPDPSSLQ) the composition is skewed to polar residues. Residues 1 to 23 (MTSTLPNASTPDPSSLQPAVRPG) are disordered. K111 carries the N6-(pyridoxal phosphate)lysine modification.

The protein belongs to the TrpB family. Tetramer of two alpha and two beta chains. Pyridoxal 5'-phosphate serves as cofactor.

The enzyme catalyses (1S,2R)-1-C-(indol-3-yl)glycerol 3-phosphate + L-serine = D-glyceraldehyde 3-phosphate + L-tryptophan + H2O. The protein operates within amino-acid biosynthesis; L-tryptophan biosynthesis; L-tryptophan from chorismate: step 5/5. The beta subunit is responsible for the synthesis of L-tryptophan from indole and L-serine. The sequence is that of Tryptophan synthase beta chain from Synechococcus sp. (strain CC9605).